The chain runs to 325 residues: Malate dehydrogenase (325 aa).

Gly-11–Ala-17 is an NAD(+) binding site. Residues Arg-92 and Arg-98 each contribute to the substrate site. NAD(+) contacts are provided by residues Asn-105, Gln-112, and Val-129–Asn-131. Residues Asn-131 and Arg-162 each coordinate substrate. His-187 acts as the Proton acceptor in catalysis.

This sequence belongs to the LDH/MDH superfamily. MDH type 2 family.

The enzyme catalyses (S)-malate + NAD(+) = oxaloacetate + NADH + H(+). In terms of biological role, catalyzes the reversible oxidation of malate to oxaloacetate. The polypeptide is Malate dehydrogenase (Methylococcus capsulatus (strain ATCC 33009 / NCIMB 11132 / Bath)).